The following is an 865-amino-acid chain: Xylosyltransferase 2 (865 aa).

The Cytoplasmic portion of the chain corresponds to 1–15; it reads MVASARVQKLVRRYK. Residues 16–36 form a helical; Signal-anchor for type II membrane protein membrane-spanning segment; sequence LAIATALAILLLQGLVVWSFS. The Lumenal segment spans residues 37–865; sequence GLEEDEAGEK…GPVKADGRLR (829 aa). Residues 41–157 are disordered; sequence DEAGEKGRQR…EGAPQPTDNG (117 aa). The span at 53–65 shows a compositional bias: basic and acidic residues; sequence RPLDPGEGSKDTD. The span at 73–82 shows a compositional bias: basic residues; it reads STGRRHGRWR. N-linked (GlcNAc...) asparagine glycosylation occurs at N122. A compositionally biased stretch (low complexity) spans 125–137; it reads GAAAGEALVGAAG. 4 disulfides stabilise this stretch: C162–C190, C206–C448, C467–C480, and C469–C478. UDP-alpha-D-xylose-binding positions include V239, D267, and 296 to 298; that span reads TIW. The N-linked (GlcNAc...) asparagine glycan is linked to N327. A UDP-alpha-D-xylose-binding site is contributed by 400–401; it reads DW. Residues S481 and 504–505 contribute to the UDP-alpha-D-xylose site; that span reads RK. Disulfide bonds link C581-C833 and C826-C839. N683 carries an N-linked (GlcNAc...) asparagine glycan. The disordered stretch occupies residues 846 to 865; the sequence is SLSPDPKSELGPVKADGRLR.

Belongs to the glycosyltransferase 14 family. XylT subfamily. In terms of assembly, monomer. Requires Mg(2+) as cofactor. It depends on Mn(2+) as a cofactor. Post-translationally, contains disulfide bonds. As to expression, widely expressed. Expressed at higher level in kidney and pancreas.

The protein resides in the golgi apparatus membrane. The protein localises to the secreted. It carries out the reaction UDP-alpha-D-xylose + L-seryl-[protein] = 3-O-(beta-D-xylosyl)-L-seryl-[protein] + UDP + H(+). It functions in the pathway glycan metabolism; chondroitin sulfate biosynthesis. The protein operates within glycan metabolism; heparan sulfate biosynthesis. In terms of biological role, catalyzes the first step in the biosynthesis of chondroitin sulfate, heparan sulfate and dermatan sulfate proteoglycans, such as DCN. Transfers D-xylose from UDP-D-xylose to specific serine residues of the core protein. This is Xylosyltransferase 2 (XYLT2) from Homo sapiens (Human).